The chain runs to 423 residues: Mitogen-activated protein kinase 9 (423 aa).

A Protein kinase domain is found at 26 to 321; that stretch reads YQQLKPIGSG…VDEALRHPYI (296 aa). Residues 32–40 and Lys55 contribute to the ATP site; that span reads IGSGAQGIV. The Proton acceptor role is filled by Asp151. The residue at position 183 (Thr183) is a Phosphothreonine; by MAP2K7. The TXY motif lies at 183 to 185; sequence TPY. Tyr185 carries the phosphotyrosine; by MAP2K4 modification. The segment covering 366-375 has biased composition (basic and acidic residues); that stretch reads RSKNGVKDQP. The interval 366–423 is disordered; it reads RSKNGVKDQPSDAAVSSKATPSQSSSINDISSMSTEHTLASDTDSSLDASTGPLEGCR. Residues 387–416 are compositionally biased toward low complexity; the sequence is SQSSSINDISSMSTEHTLASDTDSSLDAST.

The protein belongs to the protein kinase superfamily. CMGC Ser/Thr protein kinase family. MAP kinase subfamily. Interacts with MECOM. Binds to at least four scaffolding proteins, MAPK8IP1/JIP-1, MAPK8IP2/JIP-2, MAPK8IP3/JIP-3/JSAP1 and SPAG9/MAPK8IP4/JIP-4. These proteins also bind other components of the JNK signaling pathway. Interacts with NFATC4. Interacts with ATF7; the interaction does not phosphorylate ATF7 but acts as a docking site for ATF7-associated partners such as JUN. Interacts with BCL10. Interacts with CTNNB1 and GSK3B. Interacts with DCLK2. Interacts with MAPKBP1. Interacts with POU5F1; phosphorylates POU5F1 at 'Ser-347'. Found in a complex with SH3RF1, RAC2, MAP3K7/TAK1, MAP2K7/MKK7, MAPK8IP1/JIP1 and MAPK8/JNK1. Mg(2+) serves as cofactor. In terms of processing, dually phosphorylated on Thr-183 and Tyr-185 by MAP2K7 and MAP2K4, which activates the enzyme. Autophosphorylated in vitro.

Its subcellular location is the cytoplasm. It localises to the nucleus. It carries out the reaction L-seryl-[protein] + ATP = O-phospho-L-seryl-[protein] + ADP + H(+). It catalyses the reaction L-threonyl-[protein] + ATP = O-phospho-L-threonyl-[protein] + ADP + H(+). Its activity is regulated as follows. Activated by threonine and tyrosine phosphorylation by either of two dual specificity kinases, MAP2K4 and MAP2K7. MAP2K4 shows a strong preference for Tyr-185 while MAP2K7 phosphorylates Tyr-183 preferentially. Inhibited by dual specificity phosphatases, such as DUSP1. In terms of biological role, serine/threonine-protein kinase involved in various processes such as cell proliferation, differentiation, migration, transformation and programmed cell death. Extracellular stimuli such as pro-inflammatory cytokines or physical stress stimulate the stress-activated protein kinase/c-Jun N-terminal kinase (SAP/JNK) signaling pathway. In this cascade, two dual specificity kinases MAP2K4/MKK4 and MAP2K7/MKK7 phosphorylate and activate MAPK9/JNK2. In turn, MAPK9/JNK2 phosphorylates a number of transcription factors, primarily components of AP-1 such as JUN and ATF2 and thus regulates AP-1 transcriptional activity. In response to oxidative or ribotoxic stresses, inhibits rRNA synthesis by phosphorylating and inactivating the RNA polymerase 1-specific transcription initiation factor RRN3. Promotes stressed cell apoptosis by phosphorylating key regulatory factors including TP53 and YAP1. In T-cells, MAPK8 and MAPK9 are required for polarized differentiation of T-helper cells into Th1 cells. Upon T-cell receptor (TCR) stimulation, is activated by CARMA1, BCL10, MAP2K7 and MAP3K7/TAK1 to regulate JUN protein levels. Plays an important role in the osmotic stress-induced epithelial tight-junctions disruption. When activated, promotes beta-catenin/CTNNB1 degradation and inhibits the canonical Wnt signaling pathway. Also participates in neurite growth in spiral ganglion neurons. Phosphorylates the CLOCK-BMAL1 heterodimer and plays a role in the regulation of the circadian clock. Phosphorylates POU5F1, which results in the inhibition of POU5F1's transcriptional activity and enhances its proteasomal degradation. Phosphorylates ALKBH5 in response to reactive oxygen species (ROS), promoting ALKBH5 sumoylation and inactivation. This Rattus norvegicus (Rat) protein is Mitogen-activated protein kinase 9 (Mapk9).